We begin with the raw amino-acid sequence, 534 residues long: Glucose-6-phosphate isomerase (534 aa).

Catalysis depends on Glu356, which acts as the Proton donor. Catalysis depends on residues His387 and Lys502.

The protein belongs to the GPI family.

The protein localises to the cytoplasm. It catalyses the reaction alpha-D-glucose 6-phosphate = beta-D-fructose 6-phosphate. It functions in the pathway carbohydrate biosynthesis; gluconeogenesis. Its pathway is carbohydrate degradation; glycolysis; D-glyceraldehyde 3-phosphate and glycerone phosphate from D-glucose: step 2/4. Its function is as follows. Catalyzes the reversible isomerization of glucose-6-phosphate to fructose-6-phosphate. This chain is Glucose-6-phosphate isomerase, found in Desulfotalea psychrophila (strain LSv54 / DSM 12343).